The following is a 144-amino-acid chain: uncharacterized protein (144 aa).

The first 23 residues, 1 to 23 (MVIPLRNKYGILFLIAVCIMVSG), serve as a signal peptide directing secretion. The disordered stretch occupies residues 119-144 (QNGQRKTMTRIESKTGREEKDEKSKS). Residues 127–144 (TRIESKTGREEKDEKSKS) are compositionally biased toward basic and acidic residues.

This is an uncharacterized protein from Bacillus subtilis (strain 168).